The primary structure comprises 1007 residues: Ephrin type-A receptor 10 (1007 aa).

The first 22 residues, 1–22 (METGAGPHPLRLFVCLIPLCLA), serve as a signal peptide directing secretion. Residues 23–565 (LLLGPGRPGT…APGSRDQSPA (543 aa)) are Extracellular-facing. An Eph LBD domain is found at 35 to 216 (EVILLDSKAS…YYKQCRATVR (182 aa)). An N-linked (GlcNAc...) asparagine glycan is attached at Asn-311. Disordered stretches follow at residues 323 to 343 (ARSP…APRD) and 467 to 486 (PQSV…PGTN). 2 Fibronectin type-III domains span residues 340-452 (APRD…TGPG) and 456-554 (EEDE…TPGE). Asn-486 carries an N-linked (GlcNAc...) asparagine glycan. Residues 566–586 (VVVTVVTISALLVLGSVMSVL) form a helical membrane-spanning segment. The Cytoplasmic portion of the chain corresponds to 587–1007 (AIWRRPCDGK…LQLQGQGVQV (421 aa)). Positions 644–899 (VTLEKSLGAG…PRFSQIHSIL (256 aa)) constitute a Protein kinase domain. Residues 932–996 (PSFGSVGAWL…LSGISALQTR (65 aa)) form the SAM domain.

It belongs to the protein kinase superfamily. Tyr protein kinase family. Ephrin receptor subfamily. As to expression, expressed in the cochlea, in the organ of Corti, spiral ganglion, and stria vascularis.

The protein resides in the cell membrane. The enzyme catalyses L-tyrosyl-[protein] + ATP = O-phospho-L-tyrosyl-[protein] + ADP + H(+). Functionally, receptor for members of the ephrin-A family. Binds to EFNA3, EFNA4 and EFNA5. The sequence is that of Ephrin type-A receptor 10 (Epha10) from Mus musculus (Mouse).